The chain runs to 446 residues: Mitochondrial distribution and morphology protein 12 (446 aa).

Residues 1 to 446 (MSIDINWEAA…VYPSFWTFLV (446 aa)) enclose the SMP-LTD domain. Residues 75–85 (DNEIGDGEVSD) show a composition bias toward acidic residues. Disordered regions lie at residues 75 to 106 (DNEI…SAAD), 126 to 145 (PHDV…PIRS), and 188 to 283 (TPLS…RVRE). A compositionally biased stretch (basic and acidic residues) spans 126–138 (PHDVPIPSKEDPL). The segment covering 233 to 246 (TGNSRPSTADTLDS) has biased composition (polar residues). Over residues 260–274 (SSDDAHPNVLPRRDN) the composition is skewed to basic and acidic residues.

The protein belongs to the MDM12 family. In terms of assembly, component of the ER-mitochondria encounter structure (ERMES) or MDM complex, composed of MMM1, MDM10, MDM12 and MDM34. An MMM1 homodimer associates with one molecule of MDM12 on each side in a pairwise head-to-tail manner, and the SMP-LTD domains of MMM1 and MDM12 generate a continuous hydrophobic tunnel for phospholipid trafficking.

The protein resides in the mitochondrion outer membrane. Its subcellular location is the endoplasmic reticulum membrane. Its function is as follows. Component of the ERMES/MDM complex, which serves as a molecular tether to connect the endoplasmic reticulum (ER) and mitochondria. Components of this complex are involved in the control of mitochondrial shape and protein biogenesis, and function in nonvesicular lipid trafficking between the ER and mitochondria. MDM12 is required for the interaction of the ER-resident membrane protein MMM1 and the outer mitochondrial membrane-resident beta-barrel protein MDM10. The MDM12-MMM1 subcomplex functions in the major beta-barrel assembly pathway that is responsible for biogenesis of all mitochondrial outer membrane beta-barrel proteins, and acts in a late step after the SAM complex. The MDM10-MDM12-MMM1 subcomplex further acts in the TOM40-specific pathway after the action of the MDM12-MMM1 complex. Essential for establishing and maintaining the structure of mitochondria and maintenance of mtDNA nucleoids. The polypeptide is Mitochondrial distribution and morphology protein 12 (Coccidioides immitis (strain RS) (Valley fever fungus)).